The primary structure comprises 158 residues: Kalata-B3/B6 (158 aa).

Residues 1–22 (MAKFTKSLVLCLLLAAFVGAFG) form the signal peptide. A propeptide spanning residues 23 to 66 (AELSEADKANVVNEIAANIQREILKGVKSSETTLTMFLKEMQLK) is cleaved from the precursor. A cross-link (cyclopeptide (Gly-Asn)) is located at residues 67–96 (GLPTCGETCFGGTCNTPGCSCSSWPICTRN). Cystine bridges form between Cys71/Cys85, Cys75/Cys87, and Cys80/Cys93. A propeptide spanning residues 97-121 (GLPKRAGVKSSETTLTMFLKEMQLK) is cleaved from the precursor. Positions 122 to 151 (GLPTCGETCFGGTCNTPGCTCDPWPICTRD) form a cross-link, cyclopeptide (Gly-Asp). 3 cysteine pairs are disulfide-bonded: Cys126-Cys140, Cys130-Cys142, and Cys135-Cys148. The propeptide occupies 152 to 158 (GLPSAAA).

Belongs to the cyclotide family. Moebius subfamily. Kalata-B3 and kalata-B6 are cyclic peptides.

Probably participates in a plant defense mechanism. Has hemolytic activity. The chain is Kalata-B3/B6 (OAK2) from Oldenlandia affinis.